We begin with the raw amino-acid sequence, 323 residues long: Large ribosomal subunit protein uL10x (323 aa).

Positions 287–323 are disordered; that stretch reads DAGGGSAQAGAAAKVEEKKEESDEEDYEGGFGLFDEE. Ser-308 is subject to Phosphoserine. Residues 308–323 show a composition bias toward acidic residues; sequence SDEEDYEGGFGLFDEE. A Phosphotyrosine modification is found at Tyr-313.

The protein belongs to the universal ribosomal protein uL10 family. As to quaternary structure, P0 forms a pentameric complex by interaction with dimers of P1 and P2.

Functionally, ribosomal protein P0 is the functional equivalent of E.coli protein L10. This Arabidopsis thaliana (Mouse-ear cress) protein is Large ribosomal subunit protein uL10x (RPP0C).